We begin with the raw amino-acid sequence, 175 residues long: Transcriptional repressor NrdR (175 aa).

A zinc finger spans residues 3–34 (CPICQDTNSRVLESRSAESGKSIRRRRECMNC). The ATP-cone domain maps to 49–139 (ITIIKRDGKK…VYRKFQGIRD (91 aa)).

It belongs to the NrdR family. Requires Zn(2+) as cofactor.

Functionally, negatively regulates transcription of bacterial ribonucleotide reductase nrd genes and operons by binding to NrdR-boxes. This Trichodesmium erythraeum (strain IMS101) protein is Transcriptional repressor NrdR.